The sequence spans 189 residues: Putative zinc finger protein ORF189 (189 aa).

The C2H2-type zinc finger occupies 114–137 (YVCPYCVSRFPTVRALKIHLKRRH).

This chain is Putative zinc finger protein ORF189, found in Acidianus two-tailed virus (ATV).